Here is a 242-residue protein sequence, read N- to C-terminus: DNA repair protein RecO (242 aa).

It belongs to the RecO family.

Functionally, involved in DNA repair and RecF pathway recombination. The sequence is that of DNA repair protein RecO from Xanthobacter autotrophicus (strain ATCC BAA-1158 / Py2).